We begin with the raw amino-acid sequence, 2877 residues long: Desmoplakin (2877 aa).

The segment at 1–20 (MSCNGGSHPRINTLGRMTRA) is disordered. An interaction with PKP1, JUP, PKP2 region spans residues 1 to 591 (MSCNGGSHPR…DYMKTIEDLE (591 aa)). Residues 1 to 1063 (MSCNGGSHPR…ANSENCNKNK (1063 aa)) are globular 1. Phosphoserine occurs at positions 22 and 62. A Phosphotyrosine modification is found at tyrosine 65. At threonine 70 the chain carries Phosphothreonine. A phosphoserine mark is found at serine 174, serine 175, and serine 183. Spectrin repeat units lie at residues 185-278 (SGWD…HLRQ) and 279-382 (LQNI…LKEN). One copy of the Spectrin 3a repeat lies at 383–453 (AAYFQFFEEA…NLVNKSKKIV (71 aa)). An SH3 domain is found at 465–522 (NKPIILRALCDYKQDQKIVHKGDECILKDNNERSKWYVTGPGGVDMLVPSVGLIIPPP). Residues 523–552 (NPLAVDLSCKIEQYYEAILALWNQLYINMK) form a Spectrin 3b repeat. Spectrin repeat units lie at residues 553-634 (SLVS…IQLP), 661-776 (VIET…SLCS), and 777-890 (VRAL…DLEK). Coiled coils occupy residues 1034–1280 (LKLK…AEEN), 1313–1354 (NARH…YENE), 1395–1443 (TSGY…QKAS), and 1473–1926 (KQSL…KLED). Positions 1064-1952 (FLDQNLQKYQ…QKEIDKLRQR (889 aa)) are central fibrous rod domain. Phosphoserine occurs at positions 1665, 1715, and 2031. The tract at residues 1953-2877 (PYGSHRETQT…YSFSSSSIGY (925 aa)) is globular 2. The segment at 1967–2215 (TVDSSKLVFD…LLLSVQKRSM (249 aa)) is 4.5 X 38 AA tandem repeats (Domain A). 17 Plectin repeats span residues 2016–2052 (QPFL…PEST), 2053–2090 (VMLL…FDDR), 2091–2128 (QQIY…RETG), 2129–2166 (MRLL…RDLY), 2170–2204 (NDPR…PHTG), 2205–2240 (LLLL…PSTV), 2258–2295 (KDFL…PGTA), 2296–2333 (LELL…IEFK), 2334–2371 (EKLL…KGHG), 2372–2409 (IRLL…EELS), 2413–2447 (SDPS…EETG), 2463–2500 (SQKN…YETF), 2514–2551 (TITG…RKFF), 2617–2654 (SDPL…SITG), 2655–2692 (QRLL…QDMA), 2731–2768 (QRFL…GRAA), and 2769–2806 (QRLQ…DITG). Phosphoserine is present on residues serine 2214, serine 2216, and serine 2232. The interval 2251–2453 (DEVGERIKDF…EETGLCLLPL (203 aa)) is 4.5 X 38 AA tandem repeats (Domain B). An LRR 15 repeat occupies 2603–2628 (ISSVRNLTIRSSSLSDPLEESSPIAA). Residues 2616–2828 (LSDPLEESSP…GLPSPYNMSA (213 aa)) form a 4.5 X 38 AA tandem repeats (Domain C) region. Phosphoserine is present on residues serine 2817 and serine 2822. Residues 2817 to 2877 (SKGLPSPYNM…YSFSSSSIGY (61 aa)) are disordered. Tyrosine 2824 bears the Phosphotyrosine mark. Residues serine 2827 and serine 2831 each carry the phosphoserine modification. The interval 2830-2853 (GSRSGSRSGSRSGSRSGSRSGSRR) is 6 X 4 AA tandem repeats of G-S-R-[SR]. The segment covering 2830-2853 (GSRSGSRSGSRSGSRSGSRSGSRR) has biased composition (low complexity). Omega-N-methylarginine is present on residues arginine 2832 and arginine 2853. Residue serine 2855 is modified to Phosphoserine. Phosphothreonine is present on threonine 2859. Low complexity predominate over residues 2862–2877 (SSYSYSYSFSSSSIGY). A Phosphoserine modification is found at serine 2874.

Belongs to the plakin or cytolinker family. In terms of assembly, homodimer. Interacts with COL17A1 (via cytoplasmic region). Interacts with DSC2. Interacts with PKP1. Interacts with PKP2. Interacts weakly with TMEM65. Post-translationally, phosphorylation at Ser-2855 increases association with intermediate filament cytokeratin, potentially facilitating interaction between desmosome junctions and intermediate filament architecture. Expressed in cardiomyocytes (at protein level).

Its subcellular location is the cell junction. It localises to the desmosome. The protein localises to the cell membrane. The protein resides in the cytoplasm. Its function is as follows. Major high molecular weight protein of desmosomes. Regulates profibrotic gene expression in cardiomyocytes via activation of the MAPK14/p38 MAPK signaling cascade and increase in TGFB1 protein abundance. This is Desmoplakin from Rattus norvegicus (Rat).